Reading from the N-terminus, the 257-residue chain is Tryptophan synthase alpha chain (257 aa).

Active-site proton acceptor residues include Glu-44 and Asp-55.

The protein belongs to the TrpA family. In terms of assembly, tetramer of two alpha and two beta chains.

The enzyme catalyses (1S,2R)-1-C-(indol-3-yl)glycerol 3-phosphate + L-serine = D-glyceraldehyde 3-phosphate + L-tryptophan + H2O. It functions in the pathway amino-acid biosynthesis; L-tryptophan biosynthesis; L-tryptophan from chorismate: step 5/5. Its function is as follows. The alpha subunit is responsible for the aldol cleavage of indoleglycerol phosphate to indole and glyceraldehyde 3-phosphate. This is Tryptophan synthase alpha chain from Chlamydia felis (strain Fe/C-56) (Chlamydophila felis).